The primary structure comprises 439 residues: Xylose isomerase (439 aa).

Residues His101 and Asp104 contribute to the active site. Residues Glu232, Glu268, His271, Asp296, Asp307, Asp309, and Asp339 each coordinate Mg(2+).

This sequence belongs to the xylose isomerase family. As to quaternary structure, homotetramer. Mg(2+) serves as cofactor.

It localises to the cytoplasm. The enzyme catalyses alpha-D-xylose = alpha-D-xylulofuranose. This is Xylose isomerase from Yersinia enterocolitica serotype O:8 / biotype 1B (strain NCTC 13174 / 8081).